Consider the following 512-residue polypeptide: Reduced folate transporter (512 aa).

An N-acetylmethionine modification is found at Met1. The Cytoplasmic segment spans residues 1–29 (MVPTGQVAEKQACEEPRQDRELKSWRWLV). A helical membrane pass occupies residues 30-50 (FYLCFFGFMAQLRPGESFITP). Residues Ile48 and Thr49 each coordinate folate. Residues 51-62 (YLLERNFTKEQV) lie on the Extracellular side of the membrane. The N-linked (GlcNAc...) asparagine glycan is linked to Asn56. Residues 63–85 (TNEIIPMLPYSHLAVLVPIFLLT) form a helical membrane-spanning segment. The Cytoplasmic portion of the chain corresponds to 86-89 (DYLR). A helical transmembrane segment spans residues 90-110 (YKPVLVLQCLSFVCVWLLLLL). Residues 111 to 114 (GTSV) are Extracellular-facing. The chain crosses the membrane as a helical span at residues 115–137 (VHMQLMEVFYSITMAARIAYSSY). The folate site is built by Glu121 and Arg131. Topologically, residues 138–151 (IFSLVQPSRYQRMA) are cytoplasmic. A helical membrane pass occupies residues 152–176 (SYSRAAVLLGVFISSVLGQVLVTLG). Residue Val162 participates in folate binding. At 177–181 (GISTY) the chain is on the extracellular side. Residues 182–200 (MLNCISLGFILFSLSLSLF) form a helical membrane-spanning segment. Topologically, residues 201–266 (LKRPKRSLFF…ELVKNVRQPQ (66 aa)) are cytoplasmic. A helical membrane pass occupies residues 267-292 (LRLWCLWWVFNSAGYYLITYYVHVLW). Folate-binding residues include Tyr281, Tyr282, and Tyr286. Residues 293–300 (KITDSRLN) are Extracellular-facing. The chain crosses the membrane as a helical span at residues 301 to 323 (YNGAVDAASTLLSAITAFTAGFV). At 324–329 (NIRWAL) the chain is on the cytoplasmic side. A helical membrane pass occupies residues 330-350 (WSKLVIASVIAIQAGLVFCMF). Residues 351 to 353 (QIP) lie on the Extracellular side of the membrane. The helical transmembrane segment at 354–377 (DIWVCYVTFVLFRGAYQFLVPIAT) threads the bilayer. Residues Arg366 and Gln370 each coordinate folate. Residues 378–391 (FQIASSLSKELCAL) are Cytoplasmic-facing. A helical membrane pass occupies residues 392-415 (VFGINTFLATALKTSITLVVSDKR). Positions 400–412 (ATALKTSITLVVS) are required for substrate-binding. Over 416 to 423 (GLGLQVHQ) the chain is Extracellular. The helical transmembrane segment at 424–448 (QFRIYFMYFLTLSIICLAWAGLDGL) threads the bilayer. The Cytoplasmic segment spans residues 449–512 (RYYRRGRHQP…RADLRVEAKA (64 aa)). Phosphoserine occurs at positions 466, 471, and 476. A disordered region spans residues 479 to 512 (DGDLRRPQPSAPQLLPEDGSVEDGRADLRVEAKA). The segment covering 500–512 (EDGRADLRVEAKA) has biased composition (basic and acidic residues).

It belongs to the reduced folate carrier (RFC) transporter (TC 2.A.48) family. Expressed in liver, heart, brain, spleen, lung and skeletal muscle.

Its subcellular location is the cell membrane. The protein localises to the apical cell membrane. The protein resides in the basolateral cell membrane. The enzyme catalyses 5-amino-1-(5-phospho-beta-D-ribosyl)imidazole-4-carboxamide(in) + (6S)-5-methyl-5,6,7,8-tetrahydrofolate(out) = 5-amino-1-(5-phospho-beta-D-ribosyl)imidazole-4-carboxamide(out) + (6S)-5-methyl-5,6,7,8-tetrahydrofolate(in). Functionally, antiporter that mediates the import of reduced folates, driven by the export of organic anions. Also acts as an importer of immunoreactive cyclic dinucleotides, but with a lower transporter activity. Mechanistically, acts as a secondary active transporter, which exports intracellular organic anions down their concentration gradients to facilitate the uptake of its substrates. Has high affinity for N5-methyltetrahydrofolate, the predominant circulating form of folate. Also mediates the import of antifolate drug methotrexate. 5-amino-4-imidazolecarboxamide riboside (AICAR), when phosphorylated to AICAR monophosphate, can serve as an organic anion for antiporter activity. This is Reduced folate transporter from Rattus norvegicus (Rat).